A 375-amino-acid chain; its full sequence is Aminomethyltransferase (375 aa).

This sequence belongs to the GcvT family. As to quaternary structure, the glycine cleavage system is composed of four proteins: P, T, L and H.

The enzyme catalyses N(6)-[(R)-S(8)-aminomethyldihydrolipoyl]-L-lysyl-[protein] + (6S)-5,6,7,8-tetrahydrofolate = N(6)-[(R)-dihydrolipoyl]-L-lysyl-[protein] + (6R)-5,10-methylene-5,6,7,8-tetrahydrofolate + NH4(+). Functionally, the glycine cleavage system catalyzes the degradation of glycine. The protein is Aminomethyltransferase of Cupriavidus metallidurans (strain ATCC 43123 / DSM 2839 / NBRC 102507 / CH34) (Ralstonia metallidurans).